The chain runs to 209 residues: Ribosomal RNA large subunit methyltransferase E (209 aa).

The S-adenosyl-L-methionine site is built by Gly63, Trp65, Asp83, Asp99, and Asp124. Residue Lys164 is the Proton acceptor of the active site.

This sequence belongs to the class I-like SAM-binding methyltransferase superfamily. RNA methyltransferase RlmE family.

The protein resides in the cytoplasm. The enzyme catalyses uridine(2552) in 23S rRNA + S-adenosyl-L-methionine = 2'-O-methyluridine(2552) in 23S rRNA + S-adenosyl-L-homocysteine + H(+). Specifically methylates the uridine in position 2552 of 23S rRNA at the 2'-O position of the ribose in the fully assembled 50S ribosomal subunit. The protein is Ribosomal RNA large subunit methyltransferase E of Sodalis glossinidius (strain morsitans).